Consider the following 509-residue polypeptide: Maturase K (509 aa).

Belongs to the intron maturase 2 family. MatK subfamily.

Its subcellular location is the plastid. The protein localises to the chloroplast. Functionally, usually encoded in the trnK tRNA gene intron. Probably assists in splicing its own and other chloroplast group II introns. This chain is Maturase K, found in Anthocercis viscosa (Sticky tailflower).